A 160-amino-acid polypeptide reads, in one-letter code: Transcription elongation factor GreA (160 aa).

The stretch at 3–84 (SIVNDKILLT…SKAKIIKADL (82 aa)) forms a coiled coil.

This sequence belongs to the GreA/GreB family.

In terms of biological role, necessary for efficient RNA polymerase transcription elongation past template-encoded arresting sites. The arresting sites in DNA have the property of trapping a certain fraction of elongating RNA polymerases that pass through, resulting in locked ternary complexes. Cleavage of the nascent transcript by cleavage factors such as GreA or GreB allows the resumption of elongation from the new 3'terminus. GreA releases sequences of 2 to 3 nucleotides. The polypeptide is Transcription elongation factor GreA (Mesomycoplasma hyopneumoniae (strain 7448) (Mycoplasma hyopneumoniae)).